The chain runs to 367 residues: CCN family member 4 (367 aa).

The N-terminal stretch at 1 to 22 is a signal peptide; the sequence is MRWLLPWTLAAVAVLRVGNILA. The region spanning 45–118 is the IGFBP N-terminal domain; that stretch reads RPEFCKWPCE…RYAIGVCAQV (74 aa). 4 disulfides stabilise this stretch: Cys-49–Cys-73, Cys-53–Cys-75, Cys-55–Cys-76, and Cys-62–Cys-79. A glycan (N-linked (GlcNAc...) asparagine) is linked at Asn-86. 2 disulfide bridges follow: Cys-87–Cys-101 and Cys-93–Cys-115. The 66-residue stretch at 121–186 folds into the VWFC domain; that stretch reads VGCVLDGVRY…GQCCEQWVCD (66 aa). A glycan (N-linked (GlcNAc...) asparagine) is linked at Asn-143. Residues 215 to 260 enclose the TSP type-1 domain; sequence NCIAYTSPWSPCSTTCGLGISTRISNVNARCWPEQESRLCNLRPCD. Cystine bridges form between Cys-273/Cys-310, Cys-290/Cys-324, Cys-301/Cys-340, Cys-304/Cys-342, and Cys-309/Cys-346. The region spanning 273-347 is the CTCK domain; sequence CLAVYQPEEA…NACFCNLSCR (75 aa). Residue Asn-284 is glycosylated (N-linked (GlcNAc...) asparagine). Asn-343 is a glycosylation site (N-linked (GlcNAc...) asparagine).

The protein belongs to the CCN family. Highly expressed in kidney and lung. Lower levels in heart, brain, spleen, liver, skeletal muscle and testis. Expressed in low metastatic melanoma cells.

It localises to the secreted. In terms of biological role, downstream regulator in the Wnt/Frizzled-signaling pathway. Associated with cell survival. Adheres to skin and melanoma fibroblasts. In vitro binding to skin fibroblasts occurs through the proteoglycans, decorin and biglycan. Suppresses tumor growth in vivo. This chain is CCN family member 4 (Ccn4), found in Mus musculus (Mouse).